The primary structure comprises 133 residues: Arginine decarboxylase proenzyme (133 aa).

The active-site Schiff-base intermediate with substrate; via pyruvic acid is the Ser-81. Residue Ser-81 is modified to Pyruvic acid (Ser); by autocatalysis. Residue His-86 is the Proton acceptor; for processing activity of the active site. Residue Cys-101 is the Proton donor; for catalytic activity of the active site.

This sequence belongs to the prokaryotic AdoMetDC family. Type 1 subfamily. In terms of assembly, heterooctamer of four alpha and four beta chains arranged as a tetramer of alpha/beta heterodimers. The cofactor is pyruvate. In terms of processing, is synthesized initially as an inactive proenzyme. Formation of the active enzyme involves a self-maturation process in which the active site pyruvoyl group is generated from an internal serine residue via an autocatalytic post-translational modification. Two non-identical subunits are generated from the proenzyme in this reaction, and the pyruvate is formed at the N-terminus of the alpha chain, which is derived from the carboxyl end of the proenzyme. The post-translation cleavage follows an unusual pathway, termed non-hydrolytic serinolysis, in which the side chain hydroxyl group of the serine supplies its oxygen atom to form the C-terminus of the beta chain, while the remainder of the serine residue undergoes an oxidative deamination to produce ammonia and the pyruvoyl group blocking the N-terminus of the alpha chain.

It carries out the reaction L-arginine + H(+) = agmatine + CO2. It functions in the pathway amine and polyamine biosynthesis; agmatine biosynthesis; agmatine from L-arginine: step 1/1. Specifically catalyzes the decarboxylation of L-arginine to agmatine. Has no S-adenosylmethionine decarboxylase (AdoMetDC) activity. The sequence is that of Arginine decarboxylase proenzyme from Pyrobaculum arsenaticum (strain DSM 13514 / JCM 11321 / PZ6).